Here is a 341-residue protein sequence, read N- to C-terminus: S-adenosylmethionine:tRNA ribosyltransferase-isomerase (341 aa).

It belongs to the QueA family. As to quaternary structure, monomer.

The protein resides in the cytoplasm. It carries out the reaction 7-aminomethyl-7-carbaguanosine(34) in tRNA + S-adenosyl-L-methionine = epoxyqueuosine(34) in tRNA + adenine + L-methionine + 2 H(+). It functions in the pathway tRNA modification; tRNA-queuosine biosynthesis. In terms of biological role, transfers and isomerizes the ribose moiety from AdoMet to the 7-aminomethyl group of 7-deazaguanine (preQ1-tRNA) to give epoxyqueuosine (oQ-tRNA). In Staphylococcus aureus (strain Mu3 / ATCC 700698), this protein is S-adenosylmethionine:tRNA ribosyltransferase-isomerase.